Consider the following 258-residue polypeptide: Chaperone protein caf1M (258 aa).

The signal sequence occupies residues 1 to 20 (MILNRLSTLGIITFGMLSFA). Cysteine 121 and cysteine 160 form a disulfide bridge.

The protein belongs to the periplasmic pilus chaperone family.

It localises to the periplasm. Functionally, has a stimulatory role for the envelope antigen F1 secretion. It seems to interact with the subunit polypeptide and to prevent it from digestion by a protease. The chain is Chaperone protein caf1M (caf1M) from Yersinia pestis.